Here is a 177-residue protein sequence, read N- to C-terminus: MSNKAPVEPIVLGKMGSCYGIRGWLRVFSSTEDAESIFDYQPWFIQKGGKWEEVELESWRRHNQDIVIKLKGVEDRDAANLLTNCEIVVDSSQLPKLDDGYYWKDLMGCQVVTTEGYELGKVIDMMETGSNDVLVIKANLKDAFGIKERLVPFLDGQVIKKVDLTTRTIEVDWDPGF.

Positions 98-177 (DDGYYWKDLM…TIEVDWDPGF (80 aa)) constitute a PRC barrel domain.

It belongs to the RimM family. As to quaternary structure, binds ribosomal protein uS19.

It is found in the cytoplasm. Its function is as follows. An accessory protein needed during the final step in the assembly of 30S ribosomal subunit, possibly for assembly of the head region. Essential for efficient processing of 16S rRNA. May be needed both before and after RbfA during the maturation of 16S rRNA. It has affinity for free ribosomal 30S subunits but not for 70S ribosomes. This chain is Ribosome maturation factor RimM, found in Enterobacter sp. (strain 638).